The sequence spans 78 residues: Small acidic protein 2 (78 aa).

As to expression, expressed in siliques and anthers.

Mediates responses to the synthetic auxin 2,4-dichlorophenoxyacetic acid (2,4-D). Not involved in the response to indole-3-acetic acid (IAA). May interact with RUB modification-related components and may regulate the culling-ring ubiquitin E3 ligase complex (CRL) activity. This Arabidopsis thaliana (Mouse-ear cress) protein is Small acidic protein 2 (SMAP2).